A 499-amino-acid polypeptide reads, in one-letter code: Probable aspartyl protease At4g16563 (499 aa).

The signal sequence occupies residues 1 to 26; that stretch reads MKTCLIFFLYTTILQYYFHFSVSSLS. Residues 83 to 487 form the Peptidase A1 domain; the sequence is YLISLSVGSS…DLLNRRVGFA (405 aa). The active site involves D101. Residues C111 and C119 are joined by a disulfide bond. N-linked (GlcNAc...) asparagine glycans are attached at residues N175 and N211. D353 is an active-site residue. C396 and C445 form a disulfide bridge. N-linked (GlcNAc...) asparagine glycosylation is found at N400 and N415.

The protein belongs to the peptidase A1 family.

This chain is Probable aspartyl protease At4g16563, found in Arabidopsis thaliana (Mouse-ear cress).